The following is a 363-amino-acid chain: 3-isopropylmalate dehydrogenase (363 aa).

Residue 76–89 (GPKWDTLPGHLRPE) participates in NAD(+) binding. Arg-96, Arg-106, Arg-134, and Asp-223 together coordinate substrate. Mg(2+) is bound by residues Asp-223, Asp-247, and Asp-251. 281–293 (GSAPDIAGKGVAN) provides a ligand contact to NAD(+).

The protein belongs to the isocitrate and isopropylmalate dehydrogenases family. LeuB type 1 subfamily. Homodimer. The cofactor is Mg(2+). Requires Mn(2+) as cofactor.

It is found in the cytoplasm. The catalysed reaction is (2R,3S)-3-isopropylmalate + NAD(+) = 4-methyl-2-oxopentanoate + CO2 + NADH. Its pathway is amino-acid biosynthesis; L-leucine biosynthesis; L-leucine from 3-methyl-2-oxobutanoate: step 3/4. Its function is as follows. Catalyzes the oxidation of 3-carboxy-2-hydroxy-4-methylpentanoate (3-isopropylmalate) to 3-carboxy-4-methyl-2-oxopentanoate. The product decarboxylates to 4-methyl-2 oxopentanoate. This chain is 3-isopropylmalate dehydrogenase, found in Halalkalibacterium halodurans (strain ATCC BAA-125 / DSM 18197 / FERM 7344 / JCM 9153 / C-125) (Bacillus halodurans).